A 314-amino-acid polypeptide reads, in one-letter code: tRNA dimethylallyltransferase (314 aa).

Residue 16-23 (GPTGVGKT) participates in ATP binding. Residue 18-23 (TGVGKT) participates in substrate binding. The tract at residues 41 to 44 (DSMQ) is interaction with substrate tRNA.

This sequence belongs to the IPP transferase family. Monomer. The cofactor is Mg(2+).

The catalysed reaction is adenosine(37) in tRNA + dimethylallyl diphosphate = N(6)-dimethylallyladenosine(37) in tRNA + diphosphate. Functionally, catalyzes the transfer of a dimethylallyl group onto the adenine at position 37 in tRNAs that read codons beginning with uridine, leading to the formation of N6-(dimethylallyl)adenosine (i(6)A). The chain is tRNA dimethylallyltransferase from Desulfosudis oleivorans (strain DSM 6200 / JCM 39069 / Hxd3) (Desulfococcus oleovorans).